We begin with the raw amino-acid sequence, 379 residues long: Glucose-insensitive transcription protein 7 (379 aa).

The region spanning 181–272 is the CS domain; sequence SNRIRYDWSQ…VSEIKWEALV (92 aa). The 88-residue stretch at 292–379 folds into the SGS domain; the sequence is ASGNTKNKAK…PPQGMEPKKF (88 aa). Positions 345–379 are disordered; it reads SYTESNGTALSTNWKDVKSKTFETKPPQGMEPKKF. Over residues 346 to 358 the composition is skewed to polar residues; sequence YTESNGTALSTNW.

Its function is as follows. Involved in cyclic AMP (cAMP) pathway, possibly by participating in the assembly or the conformational activation of specific multiprotein complexes. The chain is Glucose-insensitive transcription protein 7 (git7) from Schizosaccharomyces pombe (strain 972 / ATCC 24843) (Fission yeast).